The following is a 184-amino-acid chain: Acyl-homoserine-lactone synthase (184 aa).

Belongs to the autoinducer synthase family.

It carries out the reaction a fatty acyl-[ACP] + S-adenosyl-L-methionine = an N-acyl-L-homoserine lactone + S-methyl-5'-thioadenosine + holo-[ACP] + H(+). Functionally, involved in the synthesis of the acyl-homoserine lactone (AHL) signal N-(3-hydroxydodecanoyl)-L-HSL (3-hydroxy-C(12)-HSL or OH-dDHL). Required for normal biofilm development. This is Acyl-homoserine-lactone synthase from Acinetobacter baumannii.